The primary structure comprises 350 residues: (RS)-norcoclaurine 6-O-methyltransferase (350 aa).

Residue Met166 participates in S-adenosyl-L-methionine binding. Residue Asp169 coordinates substrate. S-adenosyl-L-methionine-binding positions include Thr170, Gly195, Asp218, 238-239 (DM), and Lys252. Residues 253–257 (CILHD) and Asp306 each bind substrate. The active-site Proton acceptor is His256.

This sequence belongs to the class I-like SAM-binding methyltransferase superfamily. Cation-independent O-methyltransferase family. COMT subfamily. In terms of assembly, homodimer. As to expression, expressed in leaf primordia of rhizomes and root endodermis.

It carries out the reaction (S)-norcoclaurine + S-adenosyl-L-methionine = (S)-coclaurine + S-adenosyl-L-homocysteine + H(+). The catalysed reaction is norcoclaurine + S-adenosyl-L-methionine = coclaurine + S-adenosyl-L-homocysteine + H(+). With respect to regulation, inhibited by sanguinarine. Its function is as follows. Involved in the biosynthesis of coclaurine, a precursor of benzylisoquinoline alkaloids. Catalyzes the transfer of the S-methyl group of S-adenosyl-L-methionine (AdoMet) to the 6-hydroxyl group of norcoclaurine to form coclaurine. The protein is (RS)-norcoclaurine 6-O-methyltransferase of Thalictrum flavum subsp. glaucum (Yellow meadow rue).